The sequence spans 328 residues: Biotin synthase (328 aa).

Residues 41-260 (TAIETASLLS…VALARILMPA (220 aa)) form the Radical SAM core domain. Residues Cys56, Cys60, and Cys63 each contribute to the [4Fe-4S] cluster site. Cys100, Cys131, Cys191, and Arg264 together coordinate [2Fe-2S] cluster.

The protein belongs to the radical SAM superfamily. Biotin synthase family. In terms of assembly, homodimer. [4Fe-4S] cluster serves as cofactor. Requires [2Fe-2S] cluster as cofactor.

It carries out the reaction (4R,5S)-dethiobiotin + (sulfur carrier)-SH + 2 reduced [2Fe-2S]-[ferredoxin] + 2 S-adenosyl-L-methionine = (sulfur carrier)-H + biotin + 2 5'-deoxyadenosine + 2 L-methionine + 2 oxidized [2Fe-2S]-[ferredoxin]. Its pathway is cofactor biosynthesis; biotin biosynthesis; biotin from 7,8-diaminononanoate: step 2/2. In terms of biological role, catalyzes the conversion of dethiobiotin (DTB) to biotin by the insertion of a sulfur atom into dethiobiotin via a radical-based mechanism. This chain is Biotin synthase, found in Cereibacter sphaeroides (strain ATCC 17029 / ATH 2.4.9) (Rhodobacter sphaeroides).